Consider the following 514-residue polypeptide: Peptide chain release factor 3 (514 aa).

The 261-residue stretch at 8 to 268 folds into the tr-type G domain; sequence KKRRTFAIIS…IFLKFAPEPH (261 aa). Residues 17-24, 85-89, and 139-142 contribute to the GTP site; these read SHPDAGKT, DTPGH, and NKLD.

Belongs to the TRAFAC class translation factor GTPase superfamily. Classic translation factor GTPase family. PrfC subfamily.

It localises to the cytoplasm. Increases the formation of ribosomal termination complexes and stimulates activities of RF-1 and RF-2. It binds guanine nucleotides and has strong preference for UGA stop codons. It may interact directly with the ribosome. The stimulation of RF-1 and RF-2 is significantly reduced by GTP and GDP, but not by GMP. The sequence is that of Peptide chain release factor 3 from Streptococcus pneumoniae (strain P1031).